A 122-amino-acid chain; its full sequence is Acidic phospholipase A2 homolog vipoxin A chain (122 aa).

7 cysteine pairs are disulfide-bonded: C26–C115, C28–C44, C43–C95, C49–C122, C50–C88, C57–C81, and C75–C86.

This sequence belongs to the phospholipase A2 family. Group II subfamily. D49 sub-subfamily. In terms of assembly, heterodimer of A and B (AC P14420) chains; non-covalently linked. The A chain (acidic) is non-toxic, and increases the toxicity of the B chain (basic). The A chain may act as factor stabilizing the complex structure and hence retaining its toxicity by preventing non-specific binding. Upon binding to the target membranes the A chain may dissociate. As to expression, expressed by the venom gland.

The protein localises to the secreted. Its function is as follows. Heterodimer: postsynaptic neurotoxin. In terms of biological role, monomer: Acidic phospholipase A2 homolog that is non-toxic. The chain is Acidic phospholipase A2 homolog vipoxin A chain from Vipera ammodytes meridionalis (Eastern sand viper).